A 249-amino-acid polypeptide reads, in one-letter code: MAKSGLRQDPQSTAAATVLKRAVELDSESRYPQALVCYQEGIDLLLQVLKGTKDNTKRCNLREKISKYMDRAENIKKYLDQEKEDGKYHKQIKIEENATGFSYESLFREYLNETVTEVWIEDPYIRHTHQLYNFLRFCEMLIKRPCKVKTIHLLTSLDEGIEQVQQSRGLQEIEESLRSHGVLLEVQYSSSIHDREIRFNNGWMIKIGRGLDYFKKPQSRFSLGYCDFDLRPCHETTVDIFHKKHTKNI.

The 79-residue stretch at 8–86 (QDPQSTAAAT…KYLDQEKEDG (79 aa)) folds into the MIT domain. The segment at 168-231 (RGLQEIEESL…SLGYCDFDLR (64 aa)) is important for association with membranes.

Homodimer. Interacts (via MIT domain) with CHMP1A, CHMP1B, CHMP2A and IST1.

It is found in the late endosome membrane. It localises to the midbody. Its subcellular location is the membrane. Its function is as follows. Required for efficient abscission at the end of cytokinesis, together with components of the ESCRT-III complex. The chain is MIT domain-containing protein 1 (MITD1) from Homo sapiens (Human).